A 72-amino-acid chain; its full sequence is Cytochrome b-c1 complex subunit 8-1, mitochondrial (72 aa).

Over 1–41 the chain is Mitochondrial matrix; sequence MGKQPVKLKAVVYALSPFQQKIMTGLWKDLPEKIHHKVSEN. Residues 42–58 form a helical membrane-spanning segment; it reads WISATLLVTPVVGTYWY. At 59-72 the chain is on the mitochondrial intermembrane side; sequence AQYFKEQEKLEHRF.

Belongs to the UQCRQ/QCR8 family. As to quaternary structure, component of the ubiquinol-cytochrome c oxidoreductase (cytochrome b-c1 complex, complex III, CIII), a multisubunit enzyme composed of 10 subunits. The complex is composed of 3 respiratory subunits cytochrome b (MT-CYB), cytochrome c1 (CYC1-1 or CYC1-2) and Rieske protein (UCR1-1 or UCR1-2), 2 core protein subunits MPPalpha1 (or MPPalpha2) and MPPB, and 5 low-molecular weight protein subunits QCR7-1 (or QCR7-2), UCRQ-1 (or UCRQ-2), QCR9, UCRY and probably QCR6-1 (or QCR6-2). The complex exists as an obligatory dimer and forms supercomplexes (SCs) in the inner mitochondrial membrane with NADH-ubiquinone oxidoreductase (complex I, CI), resulting in different assemblies (supercomplexes SCI(1)III(2) and SCI(2)III(4)).

The protein localises to the mitochondrion inner membrane. Its function is as follows. Component of the ubiquinol-cytochrome c oxidoreductase, a multisubunit transmembrane complex that is part of the mitochondrial electron transport chain which drives oxidative phosphorylation. The respiratory chain contains 3 multisubunit complexes succinate dehydrogenase (complex II, CII), ubiquinol-cytochrome c oxidoreductase (cytochrome b-c1 complex, complex III, CIII) and cytochrome c oxidase (complex IV, CIV), that cooperate to transfer electrons derived from NADH and succinate to molecular oxygen, creating an electrochemical gradient over the inner membrane that drives transmembrane transport and the ATP synthase. The cytochrome b-c1 complex catalyzes electron transfer from ubiquinol to cytochrome c, linking this redox reaction to translocation of protons across the mitochondrial inner membrane, with protons being carried across the membrane as hydrogens on the quinol. In the process called Q cycle, 2 protons are consumed from the matrix, 4 protons are released into the intermembrane space and 2 electrons are passed to cytochrome c. This Arabidopsis thaliana (Mouse-ear cress) protein is Cytochrome b-c1 complex subunit 8-1, mitochondrial (UCRQ-1).